A 232-amino-acid chain; its full sequence is 7-cyano-7-deazaguanine synthase (232 aa).

Residue 8–18 (FSGGQDSTTCL) coordinates ATP. Positions 189, 198, 201, and 204 each coordinate Zn(2+).

It belongs to the QueC family. Requires Zn(2+) as cofactor.

The enzyme catalyses 7-carboxy-7-deazaguanine + NH4(+) + ATP = 7-cyano-7-deazaguanine + ADP + phosphate + H2O + H(+). It participates in purine metabolism; 7-cyano-7-deazaguanine biosynthesis. Its function is as follows. Catalyzes the ATP-dependent conversion of 7-carboxy-7-deazaguanine (CDG) to 7-cyano-7-deazaguanine (preQ(0)). The sequence is that of 7-cyano-7-deazaguanine synthase from Proteus mirabilis (strain HI4320).